Consider the following 1457-residue polypeptide: Ras guanine nucleotide exchange factor C (1457 aa).

The RCC1 1 repeat unit spans residues 1-55 (MSVFTFGHGSNGALGLGKITDDTCPTPQKVNYFTEIDKRVKKVACGSYHTVFVTD). Disordered regions lie at residues 75 to 196 (FYTS…PLLN), 209 to 264 (HYES…RINK), 282 to 313 (EQQQ…DEDP), and 376 to 404 (QQQL…SLQT). Composition is skewed to low complexity over residues 83–121 (TTTT…KIVN) and 134–158 (SNTT…LPPT). Composition is skewed to basic and acidic residues over residues 171–188 (IKLD…ELIQ) and 209–224 (HYES…KDNE). Residues 225–237 (NENEEDEDDDDDD) are compositionally biased toward acidic residues. Positions 238–249 (STIRQNEDKESS) are enriched in basic and acidic residues. Low complexity-rich tracts occupy residues 283–292 (QQQQPQQPQQ) and 376–403 (QQQL…SSLQ). RCC1 repeat units lie at residues 351 to 401 (GGNV…SSSS), 432 to 483 (WGEL…CYTE), 485 to 549 (GKMY…VLTQ), and 590 to 647 (SGEV…ALVE). Positions 650–971 (PKTKLALQLV…QVLLERMNQN (322 aa)) constitute a DH domain. Residues 703–715 (LPPSLKGLSGGLP) show a composition bias toward low complexity. The disordered stretch occupies residues 703-762 (LPPSLKGLSGGLPDNANNTIKNGKDKDNHHNGDSNGHHSNGHYHGNGNNGNNSITTSNSI). Residues 724-738 (NGKDKDNHHNGDSNG) show a composition bias toward basic and acidic residues. The span at 739 to 762 (HHSNGHYHGNGNNGNNSITTSNSI) shows a compositional bias: low complexity. The region spanning 989 to 1109 (GNPQIMGGSL…SVSQIKLQYF (121 aa)) is the N-terminal Ras-GEF domain. A disordered region spans residues 1127–1210 (LTQNEITTPP…NNNNNNNNLT (84 aa)). Positions 1138-1211 (LQIQNNNQNN…NNNNNNNLTN (74 aa)) form a coiled coil. Positions 1142–1210 (NNNQNNNLEN…NNNNNNNNLT (69 aa)) are enriched in low complexity. Residues 1232–1454 (QPIEVAQTLT…DDKQAQKISS (223 aa)) form the Ras-GEF domain.

In terms of biological role, promotes the exchange of Ras-bound GDP by GTP. This chain is Ras guanine nucleotide exchange factor C (gefC), found in Dictyostelium discoideum (Social amoeba).